The following is a 908-amino-acid chain: Protein translocase subunit SecA (908 aa).

Residues Gln87, 105–109 (GEGKT), and Asp512 contribute to the ATP site. The tract at residues 865-908 (GGDDGSDEMMAHTPMIRDGDKVGRNDPCPCGSGRKYKQCHGKLS) is disordered. A compositionally biased stretch (basic and acidic residues) spans 879–888 (MIRDGDKVGR). Zn(2+) contacts are provided by Cys892, Cys894, Cys903, and His904. The span at 898–908 (RKYKQCHGKLS) shows a compositional bias: basic residues.

This sequence belongs to the SecA family. Monomer and homodimer. Part of the essential Sec protein translocation apparatus which comprises SecA, SecYEG and auxiliary proteins SecDF-YajC and YidC. Zn(2+) serves as cofactor.

The protein resides in the cell inner membrane. The protein localises to the cytoplasm. It carries out the reaction ATP + H2O + cellular proteinSide 1 = ADP + phosphate + cellular proteinSide 2.. Part of the Sec protein translocase complex. Interacts with the SecYEG preprotein conducting channel. Has a central role in coupling the hydrolysis of ATP to the transfer of proteins into and across the cell membrane, serving both as a receptor for the preprotein-SecB complex and as an ATP-driven molecular motor driving the stepwise translocation of polypeptide chains across the membrane. The protein is Protein translocase subunit SecA of Shewanella sp. (strain ANA-3).